The following is a 365-amino-acid chain: UDP-N-acetylglucosamine--N-acetylmuramyl-(pentapeptide) pyrophosphoryl-undecaprenol N-acetylglucosamine transferase (365 aa).

UDP-N-acetyl-alpha-D-glucosamine-binding positions include 10–12, Asn128, Arg170, Ser199, Ile250, and Gln295; that span reads TGG.

Belongs to the glycosyltransferase 28 family. MurG subfamily.

The protein localises to the cell inner membrane. It catalyses the reaction di-trans,octa-cis-undecaprenyl diphospho-N-acetyl-alpha-D-muramoyl-L-alanyl-D-glutamyl-meso-2,6-diaminopimeloyl-D-alanyl-D-alanine + UDP-N-acetyl-alpha-D-glucosamine = di-trans,octa-cis-undecaprenyl diphospho-[N-acetyl-alpha-D-glucosaminyl-(1-&gt;4)]-N-acetyl-alpha-D-muramoyl-L-alanyl-D-glutamyl-meso-2,6-diaminopimeloyl-D-alanyl-D-alanine + UDP + H(+). It functions in the pathway cell wall biogenesis; peptidoglycan biosynthesis. In terms of biological role, cell wall formation. Catalyzes the transfer of a GlcNAc subunit on undecaprenyl-pyrophosphoryl-MurNAc-pentapeptide (lipid intermediate I) to form undecaprenyl-pyrophosphoryl-MurNAc-(pentapeptide)GlcNAc (lipid intermediate II). This is UDP-N-acetylglucosamine--N-acetylmuramyl-(pentapeptide) pyrophosphoryl-undecaprenol N-acetylglucosamine transferase from Prosthecochloris aestuarii (strain DSM 271 / SK 413).